Here is a 551-residue protein sequence, read N- to C-terminus: Prunin 1 Pru du 6.0101 (551 aa).

The signal sequence occupies residues 1 to 20; that stretch reads MAKAFVFSLCLLLVFNGCLA. Cystine bridges form between C32–C65 and C108–C374. One can recognise a Cupin type-1 1 domain in the interval 37 to 312; the sequence is LQAREPDNRI…ALNVNEETAR (276 aa). Disordered stretches follow at residues 111–194, 238–293, and 311–361; these read TFEE…QKTR, NPRK…NVFS, and ARNL…QQQG. 3 stretches are compositionally biased toward low complexity: residues 114–124, 132–148, and 168–185; these read ESQQSSQQGRQ, QQQQ…QQEQ, and QEQQ…QQFR. IgE-binding stretches follow at residues 118 to 132, 145 to 159, 161 to 175, and 225 to 239; these read SSQQ…QERQ, QQEQ…QQGR, QQEE…QGQQ, and LFHV…DQNP. The segment covering 254-275 has biased composition (low complexity); sequence QQGQSQPRQQGEQGRPGQHQQP. The igE-binding stretch occupies residues 281 to 295; that stretch reads QQEQQGSGNNVFSGF. 2 stretches are compositionally biased toward polar residues: residues 282 to 293 and 311 to 323; these read QEQQGSGNNVFS and ARNL…NRNQ. A compositionally biased stretch (basic and acidic residues) spans 339–350; that stretch reads GRQEREHEERQQ. Residues 351 to 361 show a composition bias toward low complexity; that stretch reads EQLQQERQQQG. The NGXEET; peptidase recognition motif signature appears at 367–372; it reads NGLEET. Positions 380-529 constitute a Cupin type-1 2 domain; the sequence is ENIGNPERAD…AYQISREQAR (150 aa). An igE-binding region spans residues 510 to 524; it reads RALPDEVLANAYQIS.

Belongs to the 11S seed storage protein (globulins) family. As to quaternary structure, hexamer of two trimers; each subunit is composed of an acidic and a basic chain derived from a single precursor and linked by a disulfide bond. Proteolytically processed from a single precursor to produce an acidic and a basic chain that are linked by a disulfide bond. In terms of tissue distribution, expressed in seed (at protein level).

Its function is as follows. Seed storage protein. This is Prunin 1 Pru du 6.0101 from Prunus dulcis (Almond).